We begin with the raw amino-acid sequence, 106 residues long: Small ribosomal subunit protein uS10 (106 aa).

This sequence belongs to the universal ribosomal protein uS10 family. As to quaternary structure, part of the 30S ribosomal subunit.

Functionally, involved in the binding of tRNA to the ribosomes. The chain is Small ribosomal subunit protein uS10 from Prochlorococcus marinus (strain MIT 9301).